The following is a 282-amino-acid chain: Probable xyloglucan endotransglucosylase/hydrolase protein 18 (282 aa).

The signal sequence occupies residues 1–26 (MKLSCGTSFAFLIMFLFAAQSMHVYA). The region spanning 27–218 (GSFHKDVQIH…WSKAPFTAFY (192 aa)) is the GH16 domain. Residue Glu104 is the Nucleophile of the active site. Glu108 functions as the Proton donor in the catalytic mechanism. Glu108 contacts xyloglucan. Asn112 is a glycosylation site (N-linked (GlcNAc...) asparagine). Residues 121 to 123 (HTN), 131 to 133 (DKE), 197 to 198 (HW), and Gly202 contribute to the xyloglucan site. Cys226 and Cys235 form a disulfide bridge. N-linked (GlcNAc...) asparagine glycosylation is present at Asn238. Cys267 and Cys281 are oxidised to a cystine. Xyloglucan is bound at residue Arg272.

This sequence belongs to the glycosyl hydrolase 16 family. XTH group 2 subfamily. Contains at least one intrachain disulfide bond essential for its enzymatic activity. Root specific.

It localises to the secreted. It is found in the cell wall. Its subcellular location is the extracellular space. The protein localises to the apoplast. The enzyme catalyses breaks a beta-(1-&gt;4) bond in the backbone of a xyloglucan and transfers the xyloglucanyl segment on to O-4 of the non-reducing terminal glucose residue of an acceptor, which can be a xyloglucan or an oligosaccharide of xyloglucan.. Its function is as follows. Catalyzes xyloglucan endohydrolysis (XEH) and/or endotransglycosylation (XET). Cleaves and religates xyloglucan polymers, an essential constituent of the primary cell wall, and thereby participates in cell wall construction of growing tissues. This Arabidopsis thaliana (Mouse-ear cress) protein is Probable xyloglucan endotransglucosylase/hydrolase protein 18 (XTH18).